A 295-amino-acid chain; its full sequence is MSIIINGKKTANDLCEELSKKIDILKKEYNVFPCLKVILVGSNPASQVYVRNKQRKAESIGISSETIVLPDSISEDELIEKVNTLNEDSSVHGILVQLPLPKHISASRIINTVSVEKDVDGFHDENVGRLVKGEKNCLIPCTPKGSLHLIKSVENNLSGKNAVIIGRSNIVGKPMFHLLLQENCTVTILHSQSRDLADYCSKADIVVAAVGKPNFVQPDWIKKGAIVIDVGINSINIGNQSKLVGDVDFEGVKEKVKAITPVPGGVGPMTIAFLMINTLVAACLQKGVDPSDFIA.

NADP(+) contacts are provided by residues Gly166–Ser168, Ser191, and Ile232.

Belongs to the tetrahydrofolate dehydrogenase/cyclohydrolase family. In terms of assembly, homodimer.

It catalyses the reaction (6R)-5,10-methylene-5,6,7,8-tetrahydrofolate + NADP(+) = (6R)-5,10-methenyltetrahydrofolate + NADPH. It carries out the reaction (6R)-5,10-methenyltetrahydrofolate + H2O = (6R)-10-formyltetrahydrofolate + H(+). The protein operates within one-carbon metabolism; tetrahydrofolate interconversion. Functionally, catalyzes the oxidation of 5,10-methylenetetrahydrofolate to 5,10-methenyltetrahydrofolate and then the hydrolysis of 5,10-methenyltetrahydrofolate to 10-formyltetrahydrofolate. The chain is Bifunctional protein FolD from Wolbachia pipientis subsp. Culex pipiens (strain wPip).